A 157-amino-acid polypeptide reads, in one-letter code: Putative pre-16S rRNA nuclease (157 aa).

The protein belongs to the YqgF nuclease family.

It is found in the cytoplasm. Could be a nuclease involved in processing of the 5'-end of pre-16S rRNA. The polypeptide is Putative pre-16S rRNA nuclease (Orientia tsutsugamushi (strain Ikeda) (Rickettsia tsutsugamushi)).